A 116-amino-acid polypeptide reads, in one-letter code: NADH-ubiquinone oxidoreductase chain 3 (116 aa).

3 helical membrane passes run leucine 4–tryptophan 24, phenylalanine 56–leucine 76, and threonine 88–isoleucine 108.

The protein belongs to the complex I subunit 3 family. Core subunit of respiratory chain NADH dehydrogenase (Complex I) which is composed of 45 different subunits. Interacts with TMEM186. Interacts with TMEM242.

Its subcellular location is the mitochondrion inner membrane. The enzyme catalyses a ubiquinone + NADH + 5 H(+)(in) = a ubiquinol + NAD(+) + 4 H(+)(out). Functionally, core subunit of the mitochondrial membrane respiratory chain NADH dehydrogenase (Complex I) which catalyzes electron transfer from NADH through the respiratory chain, using ubiquinone as an electron acceptor. Essential for the catalytic activity of complex I. The sequence is that of NADH-ubiquinone oxidoreductase chain 3 from Osphranter robustus (Wallaroo).